The chain runs to 353 residues: Peptide-N(4)-(N-acetyl-beta-glucosaminyl)asparagine amidase (353 aa).

Positions 125, 128, and 159 each coordinate Zn(2+). The Nucleophile role is filled by cysteine 185. Active-site residues include histidine 212 and aspartate 229. Position 232 (glutamate 232) interacts with substrate. Residues 316–353 are disordered; it reads SLEKTKPSKDTSTTTLTGTKGRESGSTAWKQQRGEDGS. Residues 325-334 are compositionally biased toward low complexity; the sequence is DTSTTTLTGT.

This sequence belongs to the transglutaminase-like superfamily. PNGase family. Zn(2+) serves as cofactor.

Its subcellular location is the cytoplasm. It catalyses the reaction Hydrolysis of an N(4)-(acetyl-beta-D-glucosaminyl)asparagine residue in which the glucosamine residue may be further glycosylated, to yield a (substituted) N-acetyl-beta-D-glucosaminylamine and a peptide containing an aspartate residue.. In terms of biological role, specifically deglycosylates the denatured form of N-linked glycoproteins in the cytoplasm and assists their proteasome-mediated degradation. Cleaves the beta-aspartyl-glucosamine (GlcNAc) of the glycan and the amide side chain of Asn, converting Asn to Asp. Prefers proteins containing high-mannose over those bearing complex type oligosaccharides. Can recognize misfolded proteins in the endoplasmic reticulum that are exported to the cytosol to be destroyed and deglycosylate them, while it has no activity toward native proteins. Deglycosylation is a prerequisite for subsequent proteasome-mediated degradation of some, but not all, misfolded glycoproteins. In Kluyveromyces lactis (strain ATCC 8585 / CBS 2359 / DSM 70799 / NBRC 1267 / NRRL Y-1140 / WM37) (Yeast), this protein is Peptide-N(4)-(N-acetyl-beta-glucosaminyl)asparagine amidase (PNG1).